We begin with the raw amino-acid sequence, 114 residues long: Small nuclear ribonucleoprotein SmD1a (114 aa).

Residues 2-74 (KLVRFLMKLN…IRYYILPDSL (73 aa)) form the Sm domain. A disordered region spans residues 87–114 (VKPKKPVAGKAVGRGRGRGRGRGRGRGR). Tandem repeats lie at residues 99–100 (GR), 101–102 (GR), 103–104 (GR), 105–106 (GR), 107–108 (GR), 109–110 (GR), 111–112 (GR), and 113–114 (GR). The interval 99 to 114 (GRGRGRGRGRGRGRGR) is 8 X 2 AA tandem repeats of G-R.

It belongs to the snRNP core protein family.

It localises to the nucleus. The protein localises to the nucleus speckle. The protein resides in the nucleolus. In terms of biological role, involved in splicing regulation. Facilitates post-transcriptional gene silencing (PTGS) by limiting the degradation of transgene aberrant RNAs by the RNA quality control (RQC) machinery, thus favoring their entry into cytoplasmic siRNA bodies where they can trigger PTGS. Does not participate in the production of small RNAs. The protein is Small nuclear ribonucleoprotein SmD1a of Arabidopsis thaliana (Mouse-ear cress).